The chain runs to 184 residues: Gremlin-1 (184 aa).

Positions 1–24 are cleaved as a signal peptide; that stretch reads MVRTLYAIGAVFLLTGFLLPTAEG. Residues 24 to 77 are disordered; it reads GRKRNRGSQGAIPPPDKDQPNDSEQMQTQQQSGSRHRERGKGTSMPAEEVLESS. The N-linked (GlcNAc...) asparagine glycan is linked to asparagine 44. Positions 45–56 are enriched in polar residues; the sequence is DSEQMQTQQQSG. 4 disulfide bridges follow: cysteine 94-cysteine 144, cysteine 108-cysteine 158, cysteine 118-cysteine 176, and cysteine 122-cysteine 178. The 91-residue stretch at 94-184 folds into the CTCK domain; that stretch reads CKTQPLKQTI…ECRCISIDLD (91 aa).

Belongs to the DAN family.

The protein localises to the secreted. Functionally, cytokine that may play a role in the development of the medial pallium and during optic nerve and pecten development by modulating BMP signaling. The chain is Gremlin-1 (GREM1) from Gallus gallus (Chicken).